The chain runs to 733 residues: Probable Rho-GTPase-activating protein 6 (733 aa).

Residues 116–125 are compositionally biased toward polar residues; it reads VFNESKSSSP. Residues 116–135 are disordered; it reads VFNESKSSSPPDAHTDKYFT. A Phosphothreonine modification is found at Thr-141. A disordered region spans residues 174-256; that stretch reads RFDKPSNNGP…SKGSWSSILR (83 aa). A compositionally biased stretch (low complexity) spans 179 to 195; sequence SNNGPLGRSSLNLSSLS. Composition is skewed to polar residues over residues 196–218 and 225–240; these read HELQTSQDSPSLSATNQLSSSDT and PPSSFGSQRQFNASQD. One can recognise a Rho-GAP domain in the interval 312–546; it reads TNLCKFTFPT…GLIIHWPEVL (235 aa). A disordered region spans residues 692-713; that stretch reads PVTVTASSETNKKSQKINKKAS. A compositionally biased stretch (basic residues) spans 704–713; sequence KSQKINKKAS.

This Schizosaccharomyces pombe (strain 972 / ATCC 24843) (Fission yeast) protein is Probable Rho-GTPase-activating protein 6 (rga6).